The sequence spans 88 residues: Small ribosomal subunit protein bS20 (88 aa).

The protein belongs to the bacterial ribosomal protein bS20 family.

In terms of biological role, binds directly to 16S ribosomal RNA. The chain is Small ribosomal subunit protein bS20 from Rhodopseudomonas palustris (strain BisB18).